A 498-amino-acid chain; its full sequence is Actin-binding protein WASF2 (498 aa).

Disordered stretches follow at residues 173–203 and 240–435; these read KEKR…KEEW and NVDA…AVSD. Low complexity predominate over residues 252-263; it reads SDSASSPSPSFS. Residues 298–407 are compositionally biased toward pro residues; that stretch reads SHPPPAPPLG…PPPGPPPPPF (110 aa). The region spanning 436-453 is the WH2 domain; the sequence is ARSDLLSAIRQGFQLRRV. S474 carries the phosphoserine modification.

This sequence belongs to the SCAR/WAVE family. In terms of assembly, binds actin and the Arp2/3 complex. Interacts with BAIAP2. Component of the WAVE2 complex composed of ABI1, CYFIP1/SRA1, NCKAP1/NAP1 (NCKAP1l/HEM1 in hematopoietic cells) and WASF2/WAVE2. Directly interacts with BRK1. Interacts with FNBP1L (via the SH3 domain). As to quaternary structure, (Microbial infection) Interacts with human cytomegalovirus protein UL135. As to expression, expressed in all tissues with strongest expression in placenta, lung, and peripheral blood leukocytes, but not in skeletal muscle.

Its subcellular location is the cytoplasm. The protein localises to the cytoskeleton. It localises to the cell projection. The protein resides in the lamellipodium. It is found in the basolateral cell membrane. Its function is as follows. Downstream effector molecule involved in the transmission of signals from tyrosine kinase receptors and small GTPases to the actin cytoskeleton. Promotes formation of actin filaments. Part of the WAVE complex that regulates lamellipodia formation. The WAVE complex regulates actin filament reorganization via its interaction with the Arp2/3 complex. The sequence is that of Actin-binding protein WASF2 from Homo sapiens (Human).